We begin with the raw amino-acid sequence, 328 residues long: Biotin synthase (328 aa).

One can recognise a Radical SAM core domain in the interval 41 to 260 (TAIETASLLS…VALARILMPA (220 aa)). The [4Fe-4S] cluster site is built by C56, C60, and C63. [2Fe-2S] cluster is bound by residues C100, C131, C191, and R264.

Belongs to the radical SAM superfamily. Biotin synthase family. As to quaternary structure, homodimer. The cofactor is [4Fe-4S] cluster. Requires [2Fe-2S] cluster as cofactor.

It carries out the reaction (4R,5S)-dethiobiotin + (sulfur carrier)-SH + 2 reduced [2Fe-2S]-[ferredoxin] + 2 S-adenosyl-L-methionine = (sulfur carrier)-H + biotin + 2 5'-deoxyadenosine + 2 L-methionine + 2 oxidized [2Fe-2S]-[ferredoxin]. The protein operates within cofactor biosynthesis; biotin biosynthesis; biotin from 7,8-diaminononanoate: step 2/2. Its function is as follows. Catalyzes the conversion of dethiobiotin (DTB) to biotin by the insertion of a sulfur atom into dethiobiotin via a radical-based mechanism. This chain is Biotin synthase, found in Cereibacter sphaeroides (strain ATCC 17023 / DSM 158 / JCM 6121 / CCUG 31486 / LMG 2827 / NBRC 12203 / NCIMB 8253 / ATH 2.4.1.) (Rhodobacter sphaeroides).